We begin with the raw amino-acid sequence, 383 residues long: ATP phosphoribosyltransferase regulatory subunit (383 aa).

The protein belongs to the class-II aminoacyl-tRNA synthetase family. HisZ subfamily. Heteromultimer composed of HisG and HisZ subunits.

The protein localises to the cytoplasm. It functions in the pathway amino-acid biosynthesis; L-histidine biosynthesis; L-histidine from 5-phospho-alpha-D-ribose 1-diphosphate: step 1/9. In terms of biological role, required for the first step of histidine biosynthesis. May allow the feedback regulation of ATP phosphoribosyltransferase activity by histidine. The polypeptide is ATP phosphoribosyltransferase regulatory subunit (Paraburkholderia xenovorans (strain LB400)).